The following is a 1002-amino-acid chain: Vacuolar protein sorting-associated protein 18 homolog (1002 aa).

Serine 344 carries the phosphoserine modification. A CHCR repeat occupies 650–804 (LMAQGSRLEV…DIKGTNDVKK (155 aa)). Residues 827–880 (FEKIDNFKEAICDALRDYNQRIQELQREMAETTEQTDRVTAELQQLRQHSLTVE) are a coiled coil. Residues 885–924 (CEICEMMLLVKPFFIFICGHKFHSDCLEKHVVPLLTKEQC) form an RING-type; degenerate zinc finger.

Belongs to the VPS18 family. Component of the class C core vacuole/endosome tethering (CORVET) complex composed of at least Vps8, dor/Vps18, car/Vps33A and Vps16A; unlike in other species, Vps11 is not part of the Drosophila complex. Due to the reduced number of components the Drosophila CORVET complex is often referred to as the miniCORVET complex. Interacts with car/Vps33A. Interacts with ema. Component of the homotypic fusion and vacuole protein sorting (HOPS) complex, composed of Vps16A, car/Vps33A, dor/Vps18, Vps39, Vps11 and lt/Vps41. The tethering complex core made up of Vps16A, car/Vps33A and dor/Vps18 and shared by both HOPS and CORVET, preferentially associates with CORVET-specific Vps8 over HOPS-specific lt/Vps41. Interacts with Syx17 (via SNARE domain); the interaction may involve multiple components of the HOPS complex and may promote assembly of the Syx17-Snap29-Vamp7 trans-SNARE complex.

The protein resides in the early endosome. Its subcellular location is the late endosome membrane. The protein localises to the lysosome membrane. It localises to the cytoplasmic vesicle. It is found in the autophagosome. In terms of biological role, core component of the class C core vacuole/endosome tethering (CORVET) and the homotypic fusion and vacuole protein sorting (HOPS) tethering complexes involved in endo-lysosomal vesicle trafficking and lysosome biogenesis. The CORVET complex facilitates docking and fusion of endosomal vesicles during endosome maturation, acts upstream of HOPS, but is not involved in autophagic flux. The CORVET complex may cooperate with the early endosomal tether Rbsn-5 to mediate endosomal fusion. The HOPS complex facilitates docking and fusion of lysosomes with late endosomes and several other types of vesicles. The HOPS complex is also involved in autophagy and crinophagy (the elimination of unused secretory granules through their fusion with lysosomes). The HOPS complex mediates autophagocitic flux, probably by binding autophagosome-associated Syx17/syntaxin 17, promoting assembly of the trans-SNARE complex and instigating autophagosome-lysosome fusion. Independent of Syx17/syntaxin 17, HOPS is involved in biosynthetic transport to lysosomes and lysosome-related organelles such as eye-pigment granules. Required for endocytic degradation of boss/bride of sevenless and N/Notch in developing ommatidia. Required for autophagocytosis-dependent remodeling of myofibrils and transverse-tubules (T-tubules) during metamorphosis. In larval neuromuscular junctions, essential for endosomal sorting that traffics old or dysfunctional synaptic vesicle proteins through a degradative endolysosomal route. Required to maintain normal levels of rush, which functions in endosome formation and trafficking. The protein is Vacuolar protein sorting-associated protein 18 homolog of Drosophila melanogaster (Fruit fly).